Here is a 353-residue protein sequence, read N- to C-terminus: Diacetylchitobiose uptake system permease protein NgcF (353 aa).

Residues 1–24 (MKDTIPTAETASRRPEPAARGGRP) form a disordered region. A run of 6 helical transmembrane segments spans residues 36–56 (FFLA…LIPF), 100–120 (LLAA…AVAI), 141–161 (IISF…WAQM), 197–217 (VMFV…IAAI), 254–274 (AYIY…AMVP), and 303–323 (TAMG…VFLV). The ABC transmembrane type-1 domain maps to 95–320 (LRNVALLAAF…AVTLVFAALV (226 aa)). Residues 329-353 (GGEGESKRKAPGSRARRAAAKGGAR) form a disordered region. The span at 337 to 353 (KAPGSRARRAAAKGGAR) shows a compositional bias: basic residues.

The protein belongs to the binding-protein-dependent transport system permease family. In terms of assembly, the complex is composed of two ATP-binding proteins (MsiK), two transmembrane proteins (NgcF and NgcG) and a solute-binding protein (NgcE).

The protein resides in the cell membrane. In terms of biological role, part of the ABC transporter complex NgcEFG-MsiK involved in N,N'-diacetylchitobiose ((GlcNAc)2) uptake. Responsible for the translocation of the substrate across the membrane. This chain is Diacetylchitobiose uptake system permease protein NgcF, found in Streptomyces coelicolor (strain ATCC BAA-471 / A3(2) / M145).